Consider the following 448-residue polypeptide: Probable glucuronoxylan glucuronosyltransferase IRX7 (448 aa).

Residues 1–16 lie on the Cytoplasmic side of the membrane; sequence MTTHKHRRTEKNLCFK. Residues 17 to 37 form a helical; Signal-anchor for type II membrane protein membrane-spanning segment; that stretch reads QYYKWILCFILTLYFFASFFV. Over 38-448 the chain is Lumenal; the sequence is DHDQDHRSST…RSVRRSNSFL (411 aa). Residues N157, N189, N287, N397, and N438 are each glycosylated (N-linked (GlcNAc...) asparagine).

The protein belongs to the glycosyltransferase 47 family. Expressed in developing interfascicular fibers and xylem cells in stems and developing secondary xylem in roots.

The protein resides in the golgi apparatus membrane. In terms of biological role, involved in the synthesis of the hemicellulose glucuronoxylan, a major component of secondary cell walls. Probably involved in the synthesis of the glycosyl sequence at the glucuronoxylan reducing end. This is Probable glucuronoxylan glucuronosyltransferase IRX7 (IRX7) from Arabidopsis thaliana (Mouse-ear cress).